The primary structure comprises 374 residues: Histidinol-phosphate aminotransferase 1 (374 aa).

Lys-232 carries the N6-(pyridoxal phosphate)lysine modification.

It belongs to the class-II pyridoxal-phosphate-dependent aminotransferase family. Histidinol-phosphate aminotransferase subfamily. As to quaternary structure, homodimer. It depends on pyridoxal 5'-phosphate as a cofactor.

It carries out the reaction L-histidinol phosphate + 2-oxoglutarate = 3-(imidazol-4-yl)-2-oxopropyl phosphate + L-glutamate. It participates in amino-acid biosynthesis; L-histidine biosynthesis; L-histidine from 5-phospho-alpha-D-ribose 1-diphosphate: step 7/9. The protein is Histidinol-phosphate aminotransferase 1 (hisC1) of Ralstonia nicotianae (strain ATCC BAA-1114 / GMI1000) (Ralstonia solanacearum).